A 133-amino-acid chain; its full sequence is Ribosome-binding factor A (133 aa).

It belongs to the RbfA family. As to quaternary structure, monomer. Binds 30S ribosomal subunits, but not 50S ribosomal subunits or 70S ribosomes.

The protein localises to the cytoplasm. In terms of biological role, one of several proteins that assist in the late maturation steps of the functional core of the 30S ribosomal subunit. Associates with free 30S ribosomal subunits (but not with 30S subunits that are part of 70S ribosomes or polysomes). Required for efficient processing of 16S rRNA. May interact with the 5'-terminal helix region of 16S rRNA. The sequence is that of Ribosome-binding factor A from Salmonella typhimurium (strain LT2 / SGSC1412 / ATCC 700720).